The sequence spans 104 residues: MIRKAFVMQVNPDAHEEYQRRHNPIWLELEAVLKSHGAHNYAIYLDKARNLLFATVEIESEERWNAVASTDVCQRWWKYMTDVMPANPDNSPVSSELQEVFYLP.

Tyr-18 contacts substrate. His-22 serves as the catalytic Proton donor. Substrate is bound by residues Tyr-41 and 76 to 77; that span reads WW.

It belongs to the rhamnose mutarotase family. Homodimer.

It localises to the cytoplasm. It carries out the reaction alpha-L-rhamnose = beta-L-rhamnose. Its pathway is carbohydrate metabolism; L-rhamnose metabolism. Functionally, involved in the anomeric conversion of L-rhamnose. The sequence is that of L-rhamnose mutarotase from Escherichia coli O7:K1 (strain IAI39 / ExPEC).